The sequence spans 217 residues: Probable GTP-binding protein EngB (217 aa).

An EngB-type G domain is found at Gly33–Arg217. GTP-binding positions include Gly41–Ser48, Gly68–Glu72, Asp95–Gly98, Thr162–Asp165, and Thr196–Ser198. Residues Ser48 and Thr70 each coordinate Mg(2+).

Belongs to the TRAFAC class TrmE-Era-EngA-EngB-Septin-like GTPase superfamily. EngB GTPase family. Requires Mg(2+) as cofactor.

Functionally, necessary for normal cell division and for the maintenance of normal septation. The sequence is that of Probable GTP-binding protein EngB from Rhizobium meliloti (strain 1021) (Ensifer meliloti).